The following is a 76-amino-acid chain: Small ribosomal subunit protein bS16c (76 aa).

This sequence belongs to the bacterial ribosomal protein bS16 family.

It localises to the plastid. The protein localises to the chloroplast. In Guillardia theta (Cryptophyte), this protein is Small ribosomal subunit protein bS16c.